Here is a 322-residue protein sequence, read N- to C-terminus: NADH-quinone oxidoreductase subunit H (322 aa).

Transmembrane regions (helical) follow at residues Val12 to Ile32, Ile79 to Pro99, Val111 to Gly131, Leu151 to Phe171, Leu183 to Val203, Phe234 to Phe254, Leu262 to Leu282, and Val301 to Val321.

This sequence belongs to the complex I subunit 1 family. NDH-1 is composed of 14 different subunits. Subunits NuoA, H, J, K, L, M, N constitute the membrane sector of the complex.

Its subcellular location is the cell inner membrane. The enzyme catalyses a quinone + NADH + 5 H(+)(in) = a quinol + NAD(+) + 4 H(+)(out). NDH-1 shuttles electrons from NADH, via FMN and iron-sulfur (Fe-S) centers, to quinones in the respiratory chain. The immediate electron acceptor for the enzyme in this species is believed to be ubiquinone. Couples the redox reaction to proton translocation (for every two electrons transferred, four hydrogen ions are translocated across the cytoplasmic membrane), and thus conserves the redox energy in a proton gradient. This subunit may bind ubiquinone. The sequence is that of NADH-quinone oxidoreductase subunit H from Aeromonas salmonicida (strain A449).